Here is a 136-residue protein sequence, read N- to C-terminus: Large ribosomal subunit protein uL16 (136 aa).

Belongs to the universal ribosomal protein uL16 family. In terms of assembly, part of the 50S ribosomal subunit.

Its function is as follows. Binds 23S rRNA and is also seen to make contacts with the A and possibly P site tRNAs. This chain is Large ribosomal subunit protein uL16, found in Actinobacillus pleuropneumoniae serotype 5b (strain L20).